Consider the following 211-residue polypeptide: Mediator of RNA polymerase II transcription subunit 20 (211 aa).

This sequence belongs to the Mediator complex subunit 20 family. In terms of assembly, component of the Mediator complex.

It is found in the nucleus. In terms of biological role, component of the Mediator complex, a coactivator involved in the regulated transcription of nearly all RNA polymerase II-dependent genes. Mediator functions as a bridge to convey information from gene-specific regulatory proteins to the basal RNA polymerase II transcription machinery. Mediator is recruited to promoters by direct interactions with regulatory proteins and serves as a scaffold for the assembly of a functional preinitiation complex with RNA polymerase II and the general transcription factors. The polypeptide is Mediator of RNA polymerase II transcription subunit 20 (med20) (Xenopus laevis (African clawed frog)).